A 243-amino-acid chain; its full sequence is Small ribosomal subunit protein uS3 (243 aa).

The region spanning 39 to 110 (IRTFIQKKYG…QVRINVVEVE (72 aa)) is the KH type-2 domain. The tract at residues 216–243 (QTIPVGASPKRKASRRPQQFEDRSNENS) is disordered. The span at 233–243 (QQFEDRSNENS) shows a compositional bias: basic and acidic residues.

It belongs to the universal ribosomal protein uS3 family. In terms of assembly, part of the 30S ribosomal subunit. Forms a tight complex with proteins S10 and S14.

Binds the lower part of the 30S subunit head. Binds mRNA in the 70S ribosome, positioning it for translation. This is Small ribosomal subunit protein uS3 from Prochlorococcus marinus (strain AS9601).